A 188-amino-acid polypeptide reads, in one-letter code: Large ribosomal subunit protein uL5 (188 aa).

It belongs to the universal ribosomal protein uL5 family. Part of the 50S ribosomal subunit; contacts the 5S rRNA and probably tRNA. Forms a bridge to the 30S subunit in the 70S ribosome.

Functionally, this is one of the proteins that bind and probably mediate the attachment of the 5S RNA into the large ribosomal subunit, where it forms part of the central protuberance. In the 70S ribosome it contacts protein S13 of the 30S subunit (bridge B1b), connecting the 2 subunits; this bridge is implicated in subunit movement. May contact the P site tRNA; the 5S rRNA and some of its associated proteins might help stabilize positioning of ribosome-bound tRNAs. This chain is Large ribosomal subunit protein uL5, found in Pyrococcus horikoshii (strain ATCC 700860 / DSM 12428 / JCM 9974 / NBRC 100139 / OT-3).